Consider the following 508-residue polypeptide: MAISLSAPRTTELKPRIVVFGVGGAGGNAVNNMIEAGLEGVEFVVANTDAQQLQFAKTDRRIQLGVQITQGLGAGAHPEVGMSAAEESFPEIGEHLDGAHMVFITAGMGGGTGTGAAPIIAKCARERGILTVGVVTKPFHFEGRHRMRLADSGIQELQRYVDTLIVIPNQNLFRVANERTTFAEAFGMADQVLHSGVRSITDLMVLPGLINLDFADVRTVMTEMGKAMMGTGEGTGEDRALMAAQNAIANPLLDEVSLKGAKAVLVNVTGGMDMTLLEVDEAANAISDQVDPEANIIFGAAFDPSLEGVIRVSVVATGMDGASIAQIEPKPVSRNISAAPLIAETSRPAPQPEPARPTARYEAARPAERPVAFAPEPAPEPEIVMSAPQPEPEAELYYDEPTVAEEPRVSAAPARSVNRIVDPLVDDVAEEPLFPENNYYEERRPQKQGGFFSMFGGGRQRYEQQASAPQAQARSAQSARPQLQPIETPQADDAEDLEIPSFLRRLAN.

GTP is bound by residues 24–28 (GAGGN), 111–113 (GTG), E142, R146, and D190. 2 disordered regions span residues 342-389 (IAET…SAPQ) and 428-508 (VAEE…RLAN). Low complexity predominate over residues 464–482 (QQASAPQAQARSAQSARPQ).

Belongs to the FtsZ family. In terms of assembly, homodimer. Polymerizes to form a dynamic ring structure in a strictly GTP-dependent manner. Interacts directly with several other division proteins.

The protein localises to the cytoplasm. Its function is as follows. Essential cell division protein that forms a contractile ring structure (Z ring) at the future cell division site. The regulation of the ring assembly controls the timing and the location of cell division. One of the functions of the FtsZ ring is to recruit other cell division proteins to the septum to produce a new cell wall between the dividing cells. Binds GTP and shows GTPase activity. This is Cell division protein FtsZ from Caulobacter vibrioides (strain ATCC 19089 / CIP 103742 / CB 15) (Caulobacter crescentus).